A 251-amino-acid polypeptide reads, in one-letter code: MAIHADTHDDLRLFQTGEHACGYWSDRRARDLVLDPHDPRLGAIYPQALAWGFRRSGDLVYRPHCERCRACVPVRIAVDAFHPDRSQRRCLTRNQDLVVRVVAAERTDEQLALYRQYLKYRHPGGGMDEHGATEFDQFLIGGWSHGRFLEIREPAIAHLPGRLLAVAVTDVTEHALSAIYTFYAPEAAARSLGTFAILQQIQWAQRERRAHVYLGYWIEGHAKMNYKRRFSALEAYDGRHWCDLPAHPSGT.

Belongs to the R-transferase family. Bpt subfamily.

It is found in the cytoplasm. The enzyme catalyses N-terminal L-glutamyl-[protein] + L-leucyl-tRNA(Leu) = N-terminal L-leucyl-L-glutamyl-[protein] + tRNA(Leu) + H(+). It carries out the reaction N-terminal L-aspartyl-[protein] + L-leucyl-tRNA(Leu) = N-terminal L-leucyl-L-aspartyl-[protein] + tRNA(Leu) + H(+). Its function is as follows. Functions in the N-end rule pathway of protein degradation where it conjugates Leu from its aminoacyl-tRNA to the N-termini of proteins containing an N-terminal aspartate or glutamate. The chain is Aspartate/glutamate leucyltransferase from Xanthomonas oryzae pv. oryzae (strain KACC10331 / KXO85).